We begin with the raw amino-acid sequence, 481 residues long: Argininosuccinate lyase (481 aa).

This sequence belongs to the lyase 1 family. Argininosuccinate lyase subfamily.

It is found in the cytoplasm. It catalyses the reaction 2-(N(omega)-L-arginino)succinate = fumarate + L-arginine. The protein operates within amino-acid biosynthesis; L-arginine biosynthesis; L-arginine from L-ornithine and carbamoyl phosphate: step 3/3. This Methanococcus maripaludis (strain C7 / ATCC BAA-1331) protein is Argininosuccinate lyase.